An 838-amino-acid polypeptide reads, in one-letter code: Major vault protein (838 aa).

MVP repeat units lie at residues 13 to 52 (VHIL…VVPP), 53 to 114 (RFYC…FKLK), 118 to 170 (VNTG…HIIS), 171 to 223 (PNTA…ITLT), 224 to 278 (DTEA…IVLN), 280 to 328 (KEYC…NVVS), 329 to 380 (KDQA…IALD), and 381 to 433 (KNEG…CMSE).

As to quaternary structure, the vault ribonucleoprotein particle is a huge (400 A x 670 A) cage structure of 12.9 MDa. It consists of a dimer of half-vaults, with each half-vault comprising 39 identical major vault protein (MVP) chains, PARP4 and one or more vault RNAs (vRNAs).

It is found in the cytoplasm. The protein resides in the nucleus. Required for normal vault structure. Vaults are multi-subunit structures that may act as scaffolds for proteins involved in signal transduction. Vaults may also play a role in nucleo-cytoplasmic transport. The polypeptide is Major vault protein (Trypanosoma cruzi (strain CL Brener)).